The following is a 456-amino-acid chain: Gamma-aminobutyric acid receptor subunit alpha-1 (456 aa).

A signal peptide spans 1–27 (MRKSPGLSDYLWAWILLLSTLTGRSYG). Topologically, residues 28 to 253 (QPSLQDELKD…FHLKRKIGYF (226 aa)) are extracellular. An N-linked (GlcNAc...) asparagine glycan is attached at Asn38. Arg94 contributes to the 4-aminobutanoate binding site. An N-linked (GlcNAc...) asparagine glycan is attached at Asn138. Residue Thr157 coordinates 4-aminobutanoate. Residues Cys166 and Cys180 are joined by a disulfide bond. A helical transmembrane segment spans residues 254 to 274 (VIQTYLPCIMTVILSQVSFWL). The Cytoplasmic segment spans residues 275–279 (NRESV). The helical transmembrane segment at 280 to 301 (PARTVFGVTTVLTMTTLSISAR) threads the bilayer. Residues 302-311 (NSLPKVAYAT) lie on the Extracellular side of the membrane. The chain crosses the membrane as a helical span at residues 312 to 333 (AMDWFIAVCYAFVFSALIEFAT). At 334–421 (VNYFTKRGYA…TFNSVSKIDR (88 aa)) the chain is on the cytoplasmic side. The chain crosses the membrane as a helical span at residues 422-441 (LSRIAFPLLFGIFNLVYWAT). Over 442-456 (YLNREPQLKAPTPHQ) the chain is Extracellular.

The protein belongs to the ligand-gated ion channel (TC 1.A.9) family. Gamma-aminobutyric acid receptor (TC 1.A.9.5) subfamily. GABRA1 sub-subfamily. As to quaternary structure, heteropentamer, formed by a combination of alpha (GABRA1-6), beta (GABRB1-3), gamma (GABRG1-3), delta (GABRD), epsilon (GABRE), rho (GABRR1-3), pi (GABRP) and theta (GABRQ) subunits, each subunit exhibiting distinct physiological and pharmacological properties. Interacts with UBQLN1. Interacts with TRAK1. Interacts with KIF21B. Identified in a complex of 720 kDa composed of LHFPL4, NLGN2, GABRA1, GABRB2, GABRG2 and GABRB3. Interacts with LHFPL4. Interacts with NLGN2. Interacts with SHISA7; interaction leads to the regulation of GABA(A) receptor trafficking, channel deactivation kinetics and pharmacology.

The protein localises to the postsynaptic cell membrane. Its subcellular location is the cell membrane. It is found in the cytoplasmic vesicle membrane. It catalyses the reaction chloride(in) = chloride(out). Allosterically activated by benzodiazepines, the neuroanesthetic alphaxalone and pentobarbital. Inhibited by the antagonist bicuculline. Potentiated by histamine. In terms of biological role, alpha subunit of the heteropentameric ligand-gated chloride channel gated by gamma-aminobutyric acid (GABA), a major inhibitory neurotransmitter in the brain. GABA-gated chloride channels, also named GABA(A) receptors (GABAAR), consist of five subunits arranged around a central pore and contain GABA active binding site(s) located at the alpha and beta subunit interface(s). When activated by GABA, GABAARs selectively allow the flow of chloride anions across the cell membrane down their electrochemical gradient. Alpha-1/GABRA1-containing GABAARs are largely synaptic. Chloride influx into the postsynaptic neuron following GABAAR opening decreases the neuron ability to generate a new action potential, thereby reducing nerve transmission. GABAARs containing alpha-1 and beta-2 or -3 subunits exhibit synaptogenic activity; the gamma-2 subunit being necessary but not sufficient to induce rapid synaptic contacts formation. GABAARs function also as histamine receptor where histamine binds at the interface of two neighboring beta subunits and potentiates GABA response. GABAARs containing alpha, beta and epsilon subunits also permit spontaneous chloride channel activity while preserving the structural information required for GABA-gated openings. Alpha-1-mediated plasticity in the orbitofrontal cortex regulates context-dependent action selection. Together with rho subunits, may also control neuronal and glial GABAergic transmission in the cerebellum. This chain is Gamma-aminobutyric acid receptor subunit alpha-1 (GABRA1), found in Macaca fascicularis (Crab-eating macaque).